Consider the following 274-residue polypeptide: Diaminopimelate epimerase (274 aa).

Residues Asn-11, Gln-44, and Asn-64 each contribute to the substrate site. The Proton donor role is filled by Cys-73. Residues 74–75, Asn-157, Asn-190, and 208–209 each bind substrate; these read GN and ER. Residue Cys-217 is the Proton acceptor of the active site. 218 to 219 provides a ligand contact to substrate; it reads GS.

This sequence belongs to the diaminopimelate epimerase family. In terms of assembly, homodimer.

It is found in the cytoplasm. It catalyses the reaction (2S,6S)-2,6-diaminopimelate = meso-2,6-diaminopimelate. It functions in the pathway amino-acid biosynthesis; L-lysine biosynthesis via DAP pathway; DL-2,6-diaminopimelate from LL-2,6-diaminopimelate: step 1/1. Functionally, catalyzes the stereoinversion of LL-2,6-diaminopimelate (L,L-DAP) to meso-diaminopimelate (meso-DAP), a precursor of L-lysine and an essential component of the bacterial peptidoglycan. This is Diaminopimelate epimerase from Erwinia tasmaniensis (strain DSM 17950 / CFBP 7177 / CIP 109463 / NCPPB 4357 / Et1/99).